Here is a 2359-residue protein sequence, read N- to C-terminus: Low-reducing polyketide synthase drtA (2359 aa).

In terms of domain architecture, Ketosynthase family 3 (KS3) spans 17–444 (LPPIAVVSFA…GANAHVIVEE (428 aa)). Catalysis depends on for beta-ketoacyl synthase activity residues Cys-190, His-327, and His-367. The tract at residues 556–868 (VFTGQGSQWP…QYLAALDRGK (313 aa)) is malonyl-CoA:ACP transacylase (MAT) domain. The For malonyltransferase activity role is filled by Ser-648. Positions 940–1077 (HELLGRKILG…GRISVRQVAA (138 aa)) are N-terminal hotdog fold. The interval 940-1245 (HELLGRKILG…FKGLRFSELN (306 aa)) is dehydratase (DH) domain. The region spanning 940-1250 (HELLGRKILG…FSELNMGDGV (311 aa)) is the PKS/mFAS DH domain. His-972 functions as the Proton acceptor; for dehydratase activity in the catalytic mechanism. The C-terminal hotdog fold stretch occupies residues 1089–1250 (AYSESAEHWY…FSELNMGDGV (162 aa)). Asp-1153 acts as the Proton donor; for dehydratase activity in catalysis. Residues 1659-1970 (GSFDSLELYE…TGRHVGKVVV (312 aa)) are enoyl reductase (ER) domain. The interval 1995–2172 (SYLITGGLHG…LSLDIGAVQD (178 aa)) is ketoreductase (KR) domain. In terms of domain architecture, Carrier spans 2280–2356 (ALTEAAIELF…ALCSKLITRL (77 aa)). Ser-2316 bears the O-(pantetheine 4'-phosphoryl)serine mark.

The protein operates within secondary metabolite biosynthesis; terpenoid biosynthesis. Its function is as follows. Low-reducing polyketide synthase; part of the gene cluster that mediates the biosynthesis of various drimane-type sesquiterpene esters, compounds that exhibit diverse biological activities and are widely present in eukaryotes. The pathway begins with the synthesis of the backbone drimenol by the terpene cyclase drtB using farnesyl pyrophosphate (FPP) as substrate. The cytochrome P450 monooxygenase drtD is then responsible for the hydroxylations at C-6, C-9 and C-12, as well as the oxidation of hydroxyl groups at C-6 and C-11 to a ketone and an aldehyde, respectively. Then, the biosynthesis can go in two directions, either the hydroxylated drimenol is further hydroxylated at C-2 and C-3 by an enzyme(s) not associated with the drt cluster, or the FAD-binding oxidoreductase drtC further oxidizes C-11 or C-12 to form the butyrolactone ring. DrtB, drtD and drtC are solely responsible for the formation of the different drimane structures observed during drimane sesquiterpenes biosynthesis. The polyketide synthase drtA synthesizes different lengths (C6 and C8) of PKS chains, which are then oxidized to varying degrees by the short-chain dehydrogenase drtF. Finally, these PKS chains are transferred onto drimane sesquiterpenes by the acyltransferase drtE, forming the sesquiterpene esters. In addition to the different fatty acyl-CoA chains produced by drtA, drtE is also able to use cinnamoyl-CoA as a substrate. The chain is Low-reducing polyketide synthase drtA from Aspergillus calidoustus.